The sequence spans 110 residues: UPF0060 membrane protein Noc_2955 (110 aa).

The next 4 helical transmembrane spans lie at 7–27, 33–53, 63–83, and 87–107; these read VGLFLITALAEIAGCYLAYLW, TIWLLVPCALSLVAFVWLLSL, AAYGGVYIVMAILWLWVVNGI, and TWDLVGSAIALLGMAIIMFAP.

The protein belongs to the UPF0060 family.

It is found in the cell inner membrane. This chain is UPF0060 membrane protein Noc_2955, found in Nitrosococcus oceani (strain ATCC 19707 / BCRC 17464 / JCM 30415 / NCIMB 11848 / C-107).